Here is a 392-residue protein sequence, read N- to C-terminus: tRNA (guanine(6)-N2)-methyltransferase (392 aa).

A THUMP domain is found at 73–183 (SAIPLLNHFS…DSELFVGVDT (111 aa)). S-adenosyl-L-methionine is bound by residues 199–203 (HPAHL), 230–232 (SGT), Glu275, 303–304 (DA), and Asn317.

This sequence belongs to the methyltransferase superfamily.

The protein resides in the cytoplasm. The enzyme catalyses guanosine(6) in tRNA + S-adenosyl-L-methionine = N(2)-methylguanosine(6) in tRNA + S-adenosyl-L-homocysteine + H(+). Its function is as follows. S-adenosyl-L-methionine-dependent methyltransferase that catalyzes the methylation of the guanosine nucleotide at position 6 (m2G6) in tRNA. The polypeptide is tRNA (guanine(6)-N2)-methyltransferase (Archaeoglobus fulgidus (strain ATCC 49558 / DSM 4304 / JCM 9628 / NBRC 100126 / VC-16)).